Consider the following 91-residue polypeptide: Small ribosomal subunit protein bS20 (91 aa).

Residues 1–25 (MANTKSAEKRHRQSLKRRARNVTVR) are disordered. Basic residues predominate over residues 8–20 (EKRHRQSLKRRAR).

This sequence belongs to the bacterial ribosomal protein bS20 family.

Binds directly to 16S ribosomal RNA. This is Small ribosomal subunit protein bS20 from Myxococcus xanthus (strain DK1622).